The primary structure comprises 418 residues: MKRERGALSRASRALRLSPFVYLLLIQPVPLEGVNITSPVRLIHGTVGKSALLSVQYSSTSSDKPVVKWQLKRDKPVTVVQSIGTEVIGTLRPDYRDRIRLFENGSLLLSDLQLADEGTYEVEISITDDTFTGEKTINLTVDVPISRPQVLVASTTVLELSEAFTLNCSHENGTKPSYTWLKDGKPLLNDSRMLLSPDQKVLTITRVLMEDDDLYSCVVENPISQVRSLPVKITVYRRSSLYIILSTGGIFLLVTLVTVCACWKPSKKSRKKRKLEKQNSLEYMDQNDDRLKSEADTLPRSGEQERKNPMALYILKDKDSSEPDENPATEPRSTTEPGPPGYSVSPPVPGRSPGLPIRSARRYPRSPARSPATGRTHTSPPRAPSSPGRSRSSSRSLRTAGVQRIREQDESGQVEISA.

An N-terminal signal peptide occupies residues 1–33; that stretch reads MKRERGALSRASRALRLSPFVYLLLIQPVPLEG. The 109-residue stretch at 34–142 folds into the Ig-like V-type domain; sequence VNITSPVRLI…GEKTINLTVD (109 aa). The Extracellular segment spans residues 34-240; the sequence is VNITSPVRLI…VKITVYRRSS (207 aa). N-linked (GlcNAc...) asparagine glycosylation is found at N35, N138, N167, and N189. In terms of domain architecture, Ig-like C2-type spans 148–234; the sequence is PQVLVASTTV…QVRSLPVKIT (87 aa). A disulfide bridge links C168 with C217. Residues 241 to 261 traverse the membrane as a helical segment; that stretch reads LYIILSTGGIFLLVTLVTVCA. The Cytoplasmic segment spans residues 262–418; that stretch reads CWKPSKKSRK…DESGQVEISA (157 aa). A disordered region spans residues 271-418; the sequence is KKRKLEKQNS…DESGQVEISA (148 aa). S280 carries the post-translational modification Phosphoserine. Over residues 287–308 the composition is skewed to basic and acidic residues; sequence NDDRLKSEADTLPRSGEQERKN. Phosphoserine occurs at positions 321, 352, and 379. Residues 341-358 show a composition bias toward low complexity; it reads GYSVSPPVPGRSPGLPIR. Low complexity predominate over residues 385-396; the sequence is SSPGRSRSSSRS.

As to quaternary structure, homodimer. Dimer formation occurs predominantly through cis interactions on the cell surface. Part of a complex containing MLC1, TRPV4, AQP4 and ATP1B1. Interacts with CLCN2. In terms of processing, N-glycosylated.

It is found in the cytoplasm. Its subcellular location is the cell membrane. In terms of biological role, involved in regulating cell motility and cell-matrix interactions. May inhibit cell growth through suppression of cell proliferation. In glia, associates and targets CLCN2 at astrocytic processes and myelinated fiber tracts where it may regulate transcellular chloride flux involved in neuron excitability. This chain is Hepatic and glial cell adhesion molecule, found in Mus musculus (Mouse).